A 330-amino-acid polypeptide reads, in one-letter code: NADH-quinone oxidoreductase subunit H (330 aa).

A run of 8 helical transmembrane segments spans residues 3–23, 76–96, 118–138, 161–181, 188–208, 244–264, 272–292, and 307–327; these read AAFV…FSAL, PVFM…MAAI, VGLL…LLAG, EVVT…ISLV, AGGM…LFLI, FFIG…LIFL, FIPG…LFLW, and WLCW…TGIV.

It belongs to the complex I subunit 1 family. NDH-1 is composed of 14 different subunits. Subunits NuoA, H, J, K, L, M, N constitute the membrane sector of the complex.

It localises to the cell inner membrane. It catalyses the reaction a quinone + NADH + 5 H(+)(in) = a quinol + NAD(+) + 4 H(+)(out). NDH-1 shuttles electrons from NADH, via FMN and iron-sulfur (Fe-S) centers, to quinones in the respiratory chain. The immediate electron acceptor for the enzyme in this species is believed to be ubiquinone. Couples the redox reaction to proton translocation (for every two electrons transferred, four hydrogen ions are translocated across the cytoplasmic membrane), and thus conserves the redox energy in a proton gradient. This subunit may bind ubiquinone. This is NADH-quinone oxidoreductase subunit H from Nitratiruptor sp. (strain SB155-2).